The primary structure comprises 435 residues: UDP-N-acetylmuramoylalanine--D-glutamate ligase (435 aa).

Position 114-120 (114-120 (GSNGKST)) interacts with ATP.

This sequence belongs to the MurCDEF family.

The protein resides in the cytoplasm. The catalysed reaction is UDP-N-acetyl-alpha-D-muramoyl-L-alanine + D-glutamate + ATP = UDP-N-acetyl-alpha-D-muramoyl-L-alanyl-D-glutamate + ADP + phosphate + H(+). The protein operates within cell wall biogenesis; peptidoglycan biosynthesis. In terms of biological role, cell wall formation. Catalyzes the addition of glutamate to the nucleotide precursor UDP-N-acetylmuramoyl-L-alanine (UMA). This is UDP-N-acetylmuramoylalanine--D-glutamate ligase from Haemophilus ducreyi (strain 35000HP / ATCC 700724).